A 356-amino-acid chain; its full sequence is Zinc finger CW-type PWWP domain protein 2 (356 aa).

The segment at 24–79 adopts a CW-type zinc-finger fold; sequence MYVNKVWVQCENENCLKWRLLSSEDSAKVDHDEPWYCFMNTDSRYNNCSISEEDFP. The Zn(2+) site is built by C33, C38, C60, and C71. Residues 98-162 form the PWWP domain; that stretch reads LGSLVLVKLQ…ATFVGHYSIT (65 aa). A disordered region spans residues 279–307; that stretch reads QALQPTATPDESEEGHGEEINMGEKLSKC.

Histone methylation reader which binds to non-methylated (H3K4me0), monomethylated (H3K4me1), dimethylated (H3K4me2) and trimethylated (H3K4me3) 'Lys-4' on histone H3. The order of binding preference is H3K4me3 &gt; H3K4me2 &gt; H3K4me1 &gt; H3K4me0. The sequence is that of Zinc finger CW-type PWWP domain protein 2 (ZCWPW2) from Homo sapiens (Human).